Here is a 620-residue protein sequence, read N- to C-terminus: MGVNAVHWFRKGLRLHDNPALRECIRGADTVRCVYILDPWFAGSSNVGINRWRFLLQCLEDLDANLRKLNSRLFVIRGQPADVFPRLFKEWNIAKLSIEYDSEPFGKERDAAIKKLASEAGVEVIVRISHTLYDLDKIIELNGGQPPLTYKRFQTLISRMEPLEMPVETITPEVMKKCTTPVFDDHDEKYGVPSLEELGFDTDGLPSAVWPGGETEALTRLERHLERKASVANFERPRMNANSLLASPTGLSPYLRFGCLSCRLFYFKLTDLYKKVKKNSSPPLSLYGQLLWREFFYTAATNNPRFDKMEGNPICVQIPWDKNPEALAKWAEGRTGFPWIDAIMTQLRQEGWIHHLARHAVACFLTRGDLWISWEEGMKVFEELLLDADWSVNAGSWMWLSCSSFFQQFFHCYCPVGFGRRTDPNGDYIRRYLPVLRGFPAKYIYDPWNAPESIQKAAKCIIGVNYPKPMVNHAEASRLNIERMKQIYQQLSRYRGLGLLATVPSNPNGNGNGGLMGYSPGESISGCGSTGGAQLGTGDGHTVVQSCTLGDSHSGTSGIQQQGYCQASSILHYAHGDNQQSHLLQAGRTALGTGISAGKRPNPEEETQSVGPKVQRQSTN.

The Photolyase/cryptochrome alpha/beta domain occupies 3–132; it reads VNAVHWFRKG…EVIVRISHTL (130 aa). 3 consecutive short sequence motifs (LIR) follow at residues 50 to 54, 82 to 87, and 151 to 156; these read NRWRF, DVFPRL, and KRFQTL. Ser-252 contacts FAD. 4 short sequence motifs (LIR) span residues 255–260, 271–276, 285–290, and 335–339; these read LRFGCL, DLYKKV, SLYGQL, and TGFPW. Gln-289 serves as a coordination point for FAD. His-355 contacts FAD. Positions 379-384 match the LIR 8 motif; the sequence is KVFEEL. An FAD-binding site is contributed by 387-389; it reads DAD. 5 short sequence motifs (LIR) span residues 395–400, 411–416, 430–435, 486–491, and 492–497; these read GSWMWL, HCYCPV, RRYLPV, QIYQQL, and SRYRGL. The segment at 593–620 is disordered; sequence TGISAGKRPNPEEETQSVGPKVQRQSTN.

The protein belongs to the DNA photolyase class-1 family. In terms of assembly, component of the circadian core oscillator, which includes the CRY proteins, CLOCK or NPAS2, BMAL1 or BMAL2, CSNK1E, and the PER proteins. The cofactor is FAD. Requires (6R)-5,10-methylene-5,6,7,8-tetrahydrofolate as cofactor. Expressed in the retina.

The protein resides in the cytoplasm. It localises to the nucleus. In terms of biological role, transcriptional repressor which forms a core component of the circadian clock. The circadian clock, an internal time-keeping system, regulates various physiological processes through the generation of approximately 24 hour circadian rhythms in gene expression, which are translated into rhythms in metabolism and behavior. It is derived from the Latin roots 'circa' (about) and 'diem' (day) and acts as an important regulator of a wide array of physiological functions including metabolism, sleep, body temperature, blood pressure, endocrine, immune, cardiovascular, and renal function. Consists of two major components: the central clock, residing in the suprachiasmatic nucleus (SCN) of the brain, and the peripheral clocks that are present in nearly every tissue and organ system. Both the central and peripheral clocks can be reset by environmental cues, also known as Zeitgebers (German for 'timegivers'). The predominant Zeitgeber for the central clock is light, which is sensed by retina and signals directly to the SCN. The central clock entrains the peripheral clocks through neuronal and hormonal signals, body temperature and feeding-related cues, aligning all clocks with the external light/dark cycle. Circadian rhythms allow an organism to achieve temporal homeostasis with its environment at the molecular level by regulating gene expression to create a peak of protein expression once every 24 hours to control when a particular physiological process is most active with respect to the solar day. Transcription and translation of core clock components (CLOCK, NPAS2, BMAL1, BMAL2, PER1, PER2, PER3, CRY1 and CRY2) plays a critical role in rhythm generation, whereas delays imposed by post-translational modifications (PTMs) are important for determining the period (tau) of the rhythms (tau refers to the period of a rhythm and is the length, in time, of one complete cycle). A diurnal rhythm is synchronized with the day/night cycle, while the ultradian and infradian rhythms have a period shorter and longer than 24 hours, respectively. Disruptions in the circadian rhythms contribute to the pathology of cardiovascular diseases, cancer, metabolic syndromes and aging. A transcription/translation feedback loop (TTFL) forms the core of the molecular circadian clock mechanism. Transcription factors, CLOCK or NPAS2 and BMAL1 or BMAL2, form the positive limb of the feedback loop, act in the form of a heterodimer and activate the transcription of core clock genes and clock-controlled genes (involved in key metabolic processes), harboring E-box elements (5'-CACGTG-3') within their promoters. The core clock genes: PER1/2/3 and CRY1/2 which are transcriptional repressors form the negative limb of the feedback loop and interact with the CLOCK|NPAS2-BMAL1|BMAL2 heterodimer inhibiting its activity and thereby negatively regulating their own expression. This heterodimer also activates nuclear receptors NR1D1/2 and RORA/B/G, which form a second feedback loop and which activate and repress BMAL1 transcription, respectively. CRY1 and CRY2 have redundant functions but also differential and selective contributions at least in defining the pace of the SCN circadian clock and its circadian transcriptional outputs. More potent transcriptional repressor in cerebellum and liver than CRY2, though more effective in lengthening the period of the SCN oscillator. On its side, CRY2 seems to play a critical role in tuning SCN circadian period by opposing the action of CRY1. With CRY2, is dispensable for circadian rhythm generation but necessary for the development of intercellular networks for rhythm synchrony. Capable of translocating circadian clock core proteins such as PER proteins to the nucleus. Interacts with CLOCK-BMAL1 independently of PER proteins and is found at CLOCK-BMAL1-bound sites, suggesting that CRY may act as a molecular gatekeeper to maintain CLOCK-BMAL1 in a poised and repressed state until the proper time for transcriptional activation. The protein is Cryptochrome-1 (CRY1) of Erithacus rubecula (European robin).